Consider the following 511-residue polypeptide: 2'-acyl-2-O-sulfo-trehalose (hydroxy)phthioceranyltransferase PapA1 (511 aa).

The protein belongs to the PapA acyltransferase family.

It catalyses the reaction a (hydroxy)phthioceranyl-[(hydroxy)phthioceranic acid synthase] + 2'-palmitoyl/stearoyl-2-O-sulfo-alpha,alpha-trehalose = a 3'-(hydroxy)phthioceranyl-2'-palmitoyl/stearoyl-2-O-sulfo-alpha,alpha-trehalose + holo-[(hydroxy)phthioceranic acid synthase].. Required for the biosynthesis of sulfolipid-1 (SL-1), a major mycobacterial cell wall lipid. Catalyzes the acylation of trehalose-2-sulfate-2'-palmitate (SL659) by adding the (hydroxy)phthioceranoyl group at the 3'-position to yield the diacylated intermediate 2-palmitoyl-3-(C43)-phthioceranyl-alpha, alpha'-D-trehalose-2'-sulfate (SL1278). In Mycobacterium tuberculosis (strain CDC 1551 / Oshkosh), this protein is 2'-acyl-2-O-sulfo-trehalose (hydroxy)phthioceranyltransferase PapA1 (papA1).